The following is a 533-amino-acid chain: Non-specific phospholipase C1 (533 aa).

The signal sequence occupies residues 1 to 22; it reads MAFRRVLTTVILFCYLLISSQS.

It belongs to the bacterial phospholipase C family. As to expression, expressed in roots, leaves, stems, flowers and siliques.

The protein localises to the secreted. In Arabidopsis thaliana (Mouse-ear cress), this protein is Non-specific phospholipase C1 (NPC1).